The sequence spans 634 residues: Chaperone protein HtpG (634 aa).

Positions 1-342 (MSVETQKETL…SNDLSLNVSR (342 aa)) are a; substrate-binding. Positions 343–559 (EILQKDPVID…EQDLGLQMRQ (217 aa)) are b. The c stretch occupies residues 560-634 (ILEASGQKVP…LNKLLVELSA (75 aa)).

The protein belongs to the heat shock protein 90 family. Homodimer.

It localises to the cytoplasm. In terms of biological role, molecular chaperone. Has ATPase activity. This chain is Chaperone protein HtpG, found in Pseudomonas aeruginosa (strain ATCC 15692 / DSM 22644 / CIP 104116 / JCM 14847 / LMG 12228 / 1C / PRS 101 / PAO1).